Here is a 352-residue protein sequence, read N- to C-terminus: Ion-translocating oxidoreductase complex subunit D (352 aa).

4 helical membrane passes run 20-40, 42-62, 89-109, and 123-143; these read IMLL…WFFG, GTLV…ALVL, IPPL…VIIA, and PAMI…TSWL. Thr-187 bears the FMN phosphoryl threonine mark. 5 consecutive transmembrane segments (helical) span residues 214–234, 242–262, 267–287, 301–321, and 322–342; these read ILAG…GLWL, WHIP…GWLF, LAAP…FFIL, LIFG…GGYP, and DGVA…DYYT.

Belongs to the NqrB/RnfD family. The complex is composed of six subunits: RsxA, RsxB, RsxC, RsxD, RsxE and RsxG. FMN serves as cofactor.

It is found in the cell inner membrane. Functionally, part of a membrane-bound complex that couples electron transfer with translocation of ions across the membrane. Required to maintain the reduced state of SoxR. This is Ion-translocating oxidoreductase complex subunit D from Shigella sonnei (strain Ss046).